Here is a 7094-residue protein sequence, read N- to C-terminus: MSKINKYGLELHWAPEFPWMFEDAEEKLDNPSSSEVDIVCSTTAQKLETGGICPENHVMVDCRRLLKQECCVQSSLIREIVMNTRPYDLEVLLQDALQSREAVLVTPPLGMSLEACYVRGCNPNGWTMGLFRRRSVCNTGRCAVNKHVAYQLYMIDPAGVCFGAGQFVGWVIPLAFMPVQSRKFIVPWVMYLRKCGEKGAYNKDHKRGGFEHVYNFKVEDAYDLVHDEPKGKFSKKAYALIRGYRGVKPLLYVDQYGCDYTGGLADGLEAYADKTLQEMKALFPIWSQELPFDVTVAWHVVRDPRYVMRLQSASTIRSVAYVANPTEDLCDGSVVIKEPVHVYADDSIILRQHNLVDIMSCFYMEADAVVNAFYGVDLKDCGFVMQFGYIDCEQDLCDFKGWVPGNMIDGFACTTCGHVYETGDLLAQSSGVLPVNPVLHTKSAAGYGGFGCKDSFTLYGQTVVYFGGCVYWSPARNIWIPILKSSVKSYDGLVYTGVVGCKAIVKETNLICKALYLDYVQHKCGNLHQRELLGVSDVWHKQLLLNRGVYKPLLENIDYFNMRRAKFSLETFTVCADGFMPFLLDDLVPRAYYLAVSGQAFCDYADKICHAVVSKSKELLDVSLDSLSAAIHYLNSKIVDLAQHFSDFGTSFVSKIVHFFKTFTTSTALAFAWVLFHVLHGAYIVVESDIYFVKNIPRYASAVAQAFRSVAKVVLDSLRVTFIDGLSCFKIGRRRICLSGSKIYEVERGLLHSSQLPLDVYDLTMPSQVQKAKQKPIYLKGSGSDFSLADSVVEVVTTSLTPCGYSEPPKVADKICIVDNVYMAKAGDKYYPVVVDGHVGLLDQAWRVPCAGRRVTFKEQPTVNEIASTPKTIKVFYELDKDFNTILNTACGVFEVDDTVDMEEFYAVVVDAIEEKLSPCKELEGVGAKVSAFLQKLEDNSLFLFDEAGEEVLASKLYCAFTAPEDDDFLEESGVEEDDVEGEETDLTVTSAGEPCVASEQEESSEILEDTLDDGPCVETSDSQVEEDVEMSDFADLESVIQDYENVCFEFYTTEPEFVKVLDLYVPKATRNNCWLRSVLAVMQKLPCQFKDKNLQDLWVLYKQQYSQLFVDTLVNKIPANIVVPQGGYVADFAYWFLTLCDWQCVAYWKCIKCDLALKLKGLDAMFFYGDVVSHVCKCGESMVLIDVDVPFTAHFALKDKLFCAFITKRSVYKAACVVDVNDSHSMAVVDGKQIDDHRVTSITSDKFDFIIGHGMSFSMTTFEIAQLYGSCITPNVCFVKGDIIKVSKRVKAEVVVNPANGHMAHGGGVAKAIAVAAGQQFVKETTDMVKSKGVCATGDCYVSTGGKLCKTVLNVVGPDARTQGKQSYALLERVYKHLNKYDCVVTTLISAGIFSVPSDVSLTYLLGTAEKQVVLVSNNQEDFDLISKCQITAVEGTKKLAERLSFNVGRSIVYETDANKLILSNDVAFVSTFNVLQDVLSLRHDIALDDDARTFVQSNVDVVPEGWRVVNKFYQINGVRTVKYFECPGGIDICSQDKVFGYVQQGSFNKATVAQIKALFLDKVDILLTVDGVNFTNRFVPVGENFGKSLGNVFCDGVNVTKHKCDINYKGKVFFQFDNLSSEDLKAVRSSFNFDQKELLAYYNMLVNCSKWQVVFNGKYFTFKQANNNCFVNVSCLMLQSLNLKFKIVQWQEAWLEFRSGRPARFVSLVLAKGGFKFGDPADSRDFLRVVFSQVDLTGAICDFEIACKCGVKQEQRTGVDAVMHFGTLSREDLEIGYTVDCSCGKKLIHCVRFDVPFLICSNTPASVKLPKGVGSANIFKGDKVGHYVHVKCEQSYQLYDASNVKKVTDVTGNLSDCLYLKNLKQTFKSVLTTYYLDDVKKIEYKPDLSQYYCDGGKYYTQRIIKAQFKTFEKVDGVYTNFKLIGHTICDILNAKLGFDSSKEFVEYKVTEWPTATGDVVLATDDLYVKRYERGCITFGKPVIWLSHEQASLNSLTYFNRPLLVDENKFDVLKVDDVDDGGDISESDAKESKEINIIKLSGVKKPFKVEDSVIVNDDTSEIKYVKSLSIVDVYDMWLTGCRYVVRTANDLSMAVNVPTIRKFIKFGMTLVSIPIDLLNLREIKPVFNVVKAVRNKISACFNFIKWLFVLLFGWIKISADNKVIYTTEVASKLTCKLVALAFKNAFLTFKWSVVARGACIIATIFLLWFNFIYANVIFSDFYLPKIGFLPTFVGKIAQWIKSTFSLVTICDLYSIQDVGFKNQYCNGSIACQFCLAGFDMLDNYKAIDVVQYEADRRAFVDYTGVLKIVIELIVSYALYTAWFYPLFALISIQILTTWLPELFMLSTLHWSVRLLVSLANMLPAHVFMRFYIIIASFIKLFSLFRHVAYGCSKPGCLFCYKRNRSLRVKCSTIVGGMIRYYDVMANGGTGFCSKHQWNCIDCDSYKPGNTFITVEAALDLSKELKRPIQPTDVAYHTVTDVKQVGCYMRLFYERDGQRTYDDVNASLFVDYSNLLHSKVKGVPNMHVVVVENDADKANFLNAAVFYAQSLFRPILMVDKNLITTANTGTSVTETMFDVYVDTFLSMFDVDKKSLNALIATAHSSIKQGTQICKVLDTFLSCARKSCSIDSDVDTKCLADSVMSAVSAGLELTDESCNNLVPTYLKGDNIVAADLGVLIQNSAKHVQGNVAKIAGVSCIWSVDAFNQLSSDFQHKLKKACCKTGLKLKLTYNKQMANVSVLTTPFSLKGGAVFSYFVYVCFLLSLVCFIGLWCLMPTYTVHKSDFQLPVYTSYKVLDNGVIRDVSVEDVCFANKFEQFDQWYESTFGLSYYSNSMACPIVVAVVDQDLGSTVFNVPTKVLRYGYHVLHFITHALSADGVQCYTPHSQISYSNFYASGCVLSSACTMFAMADGSPQPYCYTEGLMQNASLYSSLVPHVRYNLANAKGFIRFPEVLREGLVRIVRTRSMSYCRVGLCEEADEGICFNFNGSWVLNNDYYRSLPGTFCGRDVFDLIYQLFKGLAQPVDFLALTASSIAGAILAVIVVLVFYYLIKLKRAFGDYTSIVFVNVIVWCVNFMMLFVFQVYPTLSCVYAICYFYATLYFPSEISVIMHLQWLVMYGTIMPLWFCLLYISVVVSNHAFWVFAYCRRLGTSVRSDGTFEEMALTTFMITKDSYCKLKNSLSDVAFNRYLSLYNKYRYYSGKMDTAAYREAACSQLAKAMDTFTNNNGSDVLYQPPTASVSTSFLQSGIVKMVNPTSKVEPCIVSVTYGNMTLNGLWLDDKVYCPRHVICSASDMTNPDYTNLLCRVTSSDFTVLFDRLSLTVMSYQMQGCMLVLTVTLQNSRTPKYTFGVVKPGETFTVLAAYNGKPQGAFHVTMRSSYTIKGSFLCGSCGSVGYVLMGDCVKFVYMHQLELSTGCHTGTDFNGDFYGPYKDAQVVQLPVQDYIQSVNFVAWLYAAILNNCNWFVQSDKCSVEDFNVWALSNGFSQVKSDLVIDALASMTGVSLETLLAAIKRLKNGFQGRQIMGSCSFEDELTPSDVYQQLAGIKLQSKRTRLVKGIVCWIMASTFLFSCIITAFVKWTMFMYVTTNMLSITFCALCVISLAMLLVKHKHLYLTMYIIPVLFTLLYNNYLVVYKQTFRGYVYAWLSYYVPSVEYTYTDEVIYGMLLLIGMVFVTLRSINHDLFSFIMFVGRVISVVSLWYMGSNLEEEILLMLASLFGTYTWTTALSMAAAKVIAKWVAVNVLYFTDIPQIKIVLVCYLFIGYIISCYWGLFSLMNSLFRMPLGVYNYKISVQELRYMNANGLRPPKNSFEALMLNFKLLGIGGVPIIEVSQFQSKLTDVKCANVVLLNCLQHLHVASNSKLWQYCSTLHNEILATSDLGVAFEKLAQLLIVLFANPAAVDSKCLTSIEEVCDDYAKDNTVLQALQSEFVNMASFVEYEVAKKNLDEARSSGSANQQQLKQLEKACNIAKSAYERDRAVARKLERMADLALTNMYKEARINDKKSKVVSALQTMLFSMVRKLDNQALNSILDNAVKGCVPLNAIPSLAANTLTIIVPDKSVYDQVVDNVYVTYAGNVWQIQTIQDSDGTNKQLNEISDDCNWPLVIIANRHNEVSATVLQNNELMPAKLKTQVVNSGPDQTCNTPTQCYYNNSNNGKIVYAILSDVDGLKYTKILKDDGNFVVLELDPPCKFTVQDVKGLKIKYLYFVKGCNTLARGWVVGTISSTVRLQAGTATEYASNSSILSLCAFSVDPKKTYLDFIQQGGTPIANCVKMLCDHAGTGMAITVKPDATTNQDSYGGASVCIYCRARVEHPDVDGLCKLRGKFVQVPVGIKDPVSYVLTHDVCQVCGFWRDGSCSCVSTDTTVQSKDTNFLNRVRGTSVDARLVPCASGLSTDVQLRAFDICNASVAGIGLHLKVNCCRFQRVDENGDKLDQFFVVKRTDLTIYNREMECYERVKDCKFVAEHDFFTFDVEGSRVPHIVRKDLTKYTMLDLCYALRHFDRNDCMLLCDILSIYAGCEQSYFTKKDWYDFVENPDIINVYKKLGPIFNRALVSATEFADKLVEVGLVGILTLDNQDLNGKWYDFGDYVIAAPGCGVAIADSYYSYMMPMLTMCHALDCELYVNNAYRLFDLVQYDFTDYKLELFNKYFKHWSMPYHPNTVDCQDDRCIIHCANFNILFSMVLPNTCFGPLVRQIFVDGVPFVVSIGYHYKELGIVMNMDVDTHRYRLSLKDLLLYAADPALHVASASALYDLRTCCFSVAAITSGVKFQTVKPGNFNQDFYDFILSKGLLKEGSSVDLKHFFFTQDGNAAITDYNYYKYNLPTMVDIKQLLFVLEVVYKYFEIYDGGCIPASQVIVNNYDKSAGYPFNKFGKARLYYEALSFEEQDEIYAYTKRNVLPTLTQMNLKYAISAKNRARTVAGVSILSTMTGRMFHQKCLKSIAATRGVPVVIGTTKFYGGWDDMLRRLIKDVDNPVLMGWDYPKCDRAMPNILRIVSSLVLARKHEACCSQSDRFYRLANECAQVLSEIVMCGGCYYVKPGGTSSGDATTAFANSVFNICQAVSANVCALMSCNGNKIEDLSIRALQKRLYSHVYRSDMVDSTFVTEYYEFLNKHFSMMILSDDGVVCYNSDYASKGYIANISAFQQVLYYQNNVFMSESKCWVENDINNGPHEFCSQHTMLVKMDGDDVYLPYPDPSRILGAGCFVDDLLKTDSVLLIERFVSLAIDAYPLVYHENEEYQKVFRVYLEYIKKLYNDLGNQILDSYSVILSTCDGQKFTDESFYKNMYLRSAVMQSVGACVVCSSQTSLRCGSCIRKPLLCCKCCYDHVMATDHKYVLSVSPYVCNAPGCDVNDVTKLYLGGMSYYCEDHKPQYSFKLVMNGMVFGLYKQSCTGSPYIDDFNRIASCKWTDVDDYILANECTERLKLFAAETQKATEEAFKQSYASATIQEIVSERELILSWEIGKVKPPLNKNYVFTGYHFTKNGKTVLGEYVFDKSELTNGVYYRATTTYKLSVGDVFVLTSHSVANLSAPTLVPQENYSSIRFASVYSVLETFQNNVVNYQHIGMKRYCTVQGPPGTGKSHLAIGLAVYYCTARVVYTAASHAAVDALCEKAYKFLNINDCTRIVPAKVRVECYDKFKINDTTRKYVFTTINALPEMVTDIVVVDEVSMLTNYELSVINARIRAKHYVYIGDPAQLPAPRVLLSKGTLEPKYFNTVTKLMCCLGPDIFLGTCYRCPKEIVDTVSALVYENKLKAKNESSSLCFKVYYKGVTTHESSSAVNMQQIYLINKFLKANPLWHKAVFISPYNSQNFAAKRVLGLQTQTVDSAQGSEYDYVIYSQTAETAHSVNVNRFNVAITRAKKGILCVMSNMQLFEALQFTTLTLDKVPQAVETRVQCSTNLFKDCSKSYSGYHPAHAPSFLAVDDKYKATGDLAVCLGIGDSAVTYSRLISLMGFKLDVTLDGYCKLFITKEEAVKRVRAWVGFDAEGAHATRDSIGTNFPLQLGFSTGIDFVVEATGLFADRDGYSFKKAVAKAPPGEQFKHLIPLMTRGQRWDVVRPRIVQMFADHLIDLSDCVVLVTWAANFELTCLRYFAKVGREISCNVCTKRATAYNSRTGYYGCWRHSVTCDYLYNPLIVDIQQWGYIGSLSSNHDLYCSVHKGAHVASSDAIMTRCLAVYDCFCNNINWNVEYPIISNELSINTSCRVLQRVMLKAAMLCNRYTLCYDIGNPKAIACVKDFDFKFYDAQPIVKSVKTLLYSFEAHKDSFKDGLCMFWNCNVDKYPPNAVVCRFDTRVLNNLNLPGCNGGSLYVNKHAFHTKPFSRAAFEHLKPMPFFYYSDTPCVYMDGMDAKQVDYVPLKSATCITRCNLGGAVCLKHAEEYREYLESYNTATTAGFTFWVYKTFDFYNLWNTFTKLQSLENVVYNLVKTGHYTGQAGEMPCAIINDKVVAKIDKEDVVIFINNTTYPTNVAVELFAKRSIRHHPELKLFRNLNIDVCWKHVIWDYARESIFCSNTYGVCMYTDLKFIDKLNVLFDGRDNGALEAFKRSNNGVYISTTKVKSLSMIKGPPRAELNGVVVDKVGDTDCVFYFAVRKEGQDVIFSQFDSLRVSSNQSPQGNLGSNEPGNVGGNDALATSTIFTQSRVISSFTCRTDMEKDFIALDQDLFIQKYGLEDYAFEHIVYGNFNQKIIGGLHLLIGLYRRQQTSNLVIQEFVSYDSSIHSYFITDEKSGGSKSVCTVIDILLDDFVALVKSLNLNCVSKVVNVNVDFKDFQFMLWCNDEKVMTFYPRLQAASDWKPGYSMPVLYKYLNSPMERVSLWNYGKPVTLPTGCMMNVAKYTQLCQYLNTTTLAVPVNMRVLHLGAGSEKGVAPGSAVLRQWLPAGTILVDNDLYPFVSDSVATYFGDCITLPFDCQWDLIISDMYDPITKNIGEYNVSKDGFFTYICHMIRDKLALGGSVAIKITEFSWNAELYKLMGYFAFWTVFCTNANASSSEGFLIGINYLGKPKVEIDGNVMHANYLFWRNSTVWNGGAYSLFDMAKFPLKLAGTAVINLRADQINDMVYSLLEKGKLLVRDTNKEVFVGDSLVNVI.

The CoV Nsp1 globular domain maps to 54-196; it reads PENHVMVDCR…PWVMYLRKCG (143 aa). The region spanning 216–246 is the BetaCoV Nsp1 C-terminal domain; that stretch reads FKVEDAYDLVHDEPKGKFSKKAYALIRGYRG. Residues 250-519 form the CoV Nsp2 N-terminal domain; the sequence is LLYVDQYGCD…LICKALYLDY (270 aa). Zn(2+)-binding residues include C392, C397, C413, and C416. Positions 392 to 416 are C4; the sequence is CEQDLCDFKGWVPGNMIDGFACTTC. Positions 524-713 constitute a CoV Nsp2 middle domain; that stretch reads CGNLHQRELL…AQAFRSVAKV (190 aa). Residues 733 to 851 enclose the CoV Nsp2 C-terminal domain; that stretch reads RRRICLSGSK…LDQAWRVPCA (119 aa). In terms of domain architecture, Ubiquitin-like 1 spans 853 to 966; it reads RRVTFKEQPT…LYCAFTAPED (114 aa). The 239-residue stretch at 1036-1274 folds into the Peptidase C16 1 domain; it reads DLESVIQDYE…IAQLYGSCIT (239 aa). C1074 functions as the For PL1-PRO activity in the catalytic mechanism. Zn(2+) contacts are provided by C1151, C1154, C1177, and C1179. The C4-type 1 zinc finger occupies 1151 to 1179; it reads CIKCDLALKLKGLDAMFFYGDVVSHVCKC. Catalysis depends on for PL1-PRO activity residues H1225 and D1236. Residues 1275 to 1435 enclose the Macro domain; sequence PNVCFVKGDI…LISKCQITAV (161 aa). The DPUP domain maps to 1491-1563; it reads DDARTFVQSN…VAQIKALFLD (73 aa). One can recognise a Ubiquitin-like 2 domain in the interval 1562-1617; that stretch reads LDKVDILLTVDGVNFTNRFVPVGENFGKSLGNVFCDGVNVTKHKCDINYKGKVFFQ. The 262-residue stretch at 1631–1892 folds into the Peptidase C16 2 domain; it reads SSFNFDQKEL…KIEYKPDLSQ (262 aa). Residue C1671 is the For PL2-PRO activity of the active site. Positions 1749, 1751, 1783, and 1785 each coordinate Zn(2+). The C4-type 2 zinc-finger motif lies at 1749–1785; it reads CKCGVKQEQRTGVDAVMHFGTLSREDLEIGYTVDCSC. Catalysis depends on for PL2-PRO activity residues H1828 and D1842. A Nucleic acid-binding domain is found at 1906–2007; that stretch reads IKAQFKTFEK…TYFNRPLLVD (102 aa). One can recognise a G2M domain in the interval 2020–2169; the sequence is DDGGDISESD…ADNKVIYTTE (150 aa). The next 3 helical transmembrane spans lie at 2138–2158, 2199–2219, and 2227–2247; these read ISAC…WIKI, ACII…NVIF, and IGFL…TFSL. The HD1 stretch occupies residues 2138-2385; sequence ISACFNFIKW…ASFIKLFSLF (248 aa). Residues 2235 to 2296 form the 3Ecto domain; sequence GKIAQWIKST…AIDVVQYEAD (62 aa). 2 cysteine pairs are disulfide-bonded: C2251–C2275 and C2266–C2272. 3 helical membrane passes run 2313 to 2333, 2343 to 2363, and 2365 to 2385; these read LIVS…LISI, LFML…ANML, and AHVF…FSLF. Residues 2383–2473 are Y1; sequence SLFRHVAYGC…ELKRPIQPTD (91 aa). The region spanning 2383–2750 is the CoV Nsp3 Y domain; it reads SLFRHVAYGC…LTTPFSLKGG (368 aa). Zn(2+)-binding residues include H2387, C2392, C2397, C2400, C2433, H2436, C2440, and C2443. The segment at 2387-2400 is ZF1; it reads HVAYGCSKPGCLFC. The tract at residues 2433–2443 is ZF2; that stretch reads CSKHQWNCIDC. The tract at residues 2474–2566 is Y2; it reads VAYHTVTDVK…MVDKNLITTA (93 aa). The interval 2474–2750 is coV-Y; that stretch reads VAYHTVTDVK…LTTPFSLKGG (277 aa). The segment at 2567 to 2649 is Y3; sequence NTGTSVTETM…DSVMSAVSAG (83 aa). The segment at 2650–2750 is Y4; it reads LELTDESCNN…LTTPFSLKGG (101 aa). 7 helical membrane-spanning segments follow: residues 2752–2772, 2824–2844, 3009–3029, 3031–3051, 3063–3083, 3090–3110, and 3115–3135; these read VFSY…IGLW, STFG…VAVV, VFDL…FLAL, ASSI…YYLI, IVFV…VFQV, VYAI…SVIM, and LVMY…SVVV. The segment at 2752–3135 is HD2; that stretch reads VFSYFVYVCF…FCLLYISVVV (384 aa). The region spanning 3149-3246 is the Nsp4C domain; sequence LGTSVRSDGT…TASVSTSFLQ (98 aa). The Peptidase C30 domain maps to 3247 to 3549; sequence SGIVKMVNPT…YQQLAGIKLQ (303 aa). Catalysis depends on for 3CL-PRO activity residues H3287 and C3391. A run of 7 helical transmembrane segments spans residues 3558 to 3578, 3588 to 3608, 3614 to 3634, 3657 to 3677, 3684 to 3704, 3711 to 3731, and 3755 to 3775; these read GIVC…TAFV, TNML…MLLV, YLTM…YLVV, TYTD…FVTL, LFSF…WYMG, ILLM…LSMA, and IVLV…GLFS. The HD3 stretch occupies residues 3558-3775; it reads GIVCWIMAST…IISCYWGLFS (218 aa). The 89-residue stretch at 3837–3925 folds into the RdRp Nsp7 cofactor domain; the sequence is SKLTDVKCAN…DYAKDNTVLQ (89 aa). Positions 3926 to 4122 constitute a RdRp Nsp8 cofactor domain; sequence ALQSEFVNMA…HNEVSATVLQ (197 aa). Residues 4123 to 4232 enclose the Nsp9 ssRNA-binding domain; it reads NNELMPAKLK…GTISSTVRLQ (110 aa). The region spanning 4233-4370 is the ExoN/MTase coactivator domain; that stretch reads AGTATEYASN…CVSTDTTVQS (138 aa). Zn(2+) is bound by residues C4306, C4309, H4315, C4322, C4348, C4351, C4359, and C4361. Zinc fingers lie at residues 4306–4322 and 4348–4361; these read CIYC…DGLC and CQVC…SCSC. The 256-residue stretch at 4375–4630 folds into the NiRAN domain; the sequence is FLNRVRGTSV…DCELYVNNAY (256 aa). Residues N4578 and D4587 each contribute to the Mn(2+) site. The Nsp12 Interface domain occupies 4631-4729; that stretch reads RLFDLVQYDF…MNMDVDTHRY (99 aa). Zn(2+) is bound by residues H4660, C4666, C4671, C4675, and C4852. Residues 4730 to 5297 form the Nsp12 RNA-dependent RNA polymerase domain; sequence RLSLKDLLLY…NMYLRSAVMQ (568 aa). Residues 4732–4946 are rdRp Fingers N-ter; the sequence is SLKDLLLYAA…HQKCLKSIAA (215 aa). The interval 4947–4985 is rdRp Palm N-ter; sequence TRGVPVVIGTTKFYGGWDDMLRRLIKDVDNPVLMGWDYP. In terms of domain architecture, RdRp catalytic spans 4977–5139; it reads PVLMGWDYPK…CYNSDYASKG (163 aa). Residues 4986–5044 are rdRp Fingers C-ter; that stretch reads KCDRAMPNILRIVSSLVLARKHEACCSQSDRFYRLANECAQVLSEIVMCGGCYYVKPGG. Zn(2+) contacts are provided by H5007, C5010, and C5011. Positions 5045 to 5180 are rdRp Palm C-ter; sequence TSSGDATTAF…NNGPHEFCSQ (136 aa). Active-site residues include S5124, D5125, and D5126. The tract at residues 5181 to 5297 is rdRp Thumb; it reads HTMLVKMDGD…NMYLRSAVMQ (117 aa). Residues 5298–5410 form the CV ZBD domain; that stretch reads SVGACVVCSS…DDFNRIASCK (113 aa). 12 residues coordinate Zn(2+): C5302, C5305, C5313, C5316, C5323, C5326, H5330, H5336, C5347, C5352, C5369, and H5372. Residues 5553–5734 enclose the (+)RNA virus helicase ATP-binding domain; sequence SVLETFQNNV…MCCLGPDIFL (182 aa). 5578–5585 lines the ATP pocket; the sequence is GPPGTGKS. A (+)RNA virus helicase C-terminal domain is found at 5735–5904; sequence GTCYRCPKEI…VETRVQCSTN (170 aa). One can recognise an ExoN domain in the interval 5971-6186; sequence LFITKEEAVK…RCLAVYDCFC (216 aa). Active-site residues include D5989, E5991, and E6090. The Zn(2+) site is built by C6106, C6109, C6125, H6128, H6156, C6160, and H6163. Residues H6167 and D6172 contribute to the active site. Position 6178 (C6178) interacts with Zn(2+). An N7-MTase domain is found at 6195 to 6421; the sequence is YPIISNELSI…NLWNTFTKLQ (227 aa). 6230 to 6236 serves as a coordination point for S-adenosyl-L-methionine; sequence DIGNPKA. A gpppA-binding region spans residues 6308-6322; the sequence is CNGGSLYVNKHAFHT. Zn(2+)-binding residues include C6346, C6367, C6378, and H6381. The region spanning 6422–6482 is the Nsp15 N-terminal oligomerization domain; it reads SLENVVYNLV…NVAVELFAKR (61 aa). An AV-Nsp11N/CoV-Nsp15M domain is found at 6483-6603; the sequence is SIRHHPELKL…FAVRKEGQDV (121 aa). In terms of domain architecture, NendoU spans 6653 to 6792; the sequence is TCRTDMEKDF…NDEKVMTFYP (140 aa). Residues H6683, H6698, K6738, K6841, D6925, K6965, and E6998 contribute to the active site. Positions 6797-7091 constitute a Nidovirus-type SAM-dependent 2'-O-MTase domain; sequence ASDWKPGYSM…KEVFVGDSLV (295 aa).

It belongs to the coronaviruses polyprotein 1ab family. Interacts with host PHB and PHB2. As to quaternary structure, interacts with papain-like protease nsp3 and non-structural protein 6. In terms of assembly, monomer. Homodimer. Only the homodimer shows catalytic activity. Interacts with nsp8 and nsp12 to form the replication-transcription complex (RTC): nsp12, nsp7, two subunits of nsp8, and up to two subunits of nsp13. As to quaternary structure, interacts with nsp7, nsp13 and nsp12 to form the replication-transcription complex (RTC): nsp12, nsp7, two subunits of nsp8, and up to two subunits of nsp13. In terms of assembly, interacts with nsp12. Interacts with proofreading exoribonuclease nsp14 and 2'-O-methyltransferase nsp16; these interactions enhance nsp14 and nsp16 enzymatic activities. As to quaternary structure, interacts with nsp7 and nsp8 to form the replication-transcription complex (RTC): nsp12, nsp7, two subunits of nsp8, and up to two subunits of nsp13. Interacts with nsp9. In terms of assembly, interacts with nsp8 to form the replication-transcription complex (RTC): nsp12, nsp7, two subunits of nsp8, and up to two subunits of nsp13. Requires Mn(2+) as cofactor. It depends on Mg(2+) as a cofactor. Post-translationally, specific enzymatic cleavages in vivo by its own proteases yield mature proteins. 3CL-PRO and PL-PRO proteinases are autocatalytically processed.

It localises to the host membrane. The protein localises to the host cytoplasm. Its subcellular location is the host perinuclear region. The protein resides in the host endoplasmic reticulum-Golgi intermediate compartment. The enzyme catalyses RNA(n) + a ribonucleoside 5'-triphosphate = RNA(n+1) + diphosphate. It catalyses the reaction ATP + H2O = ADP + phosphate + H(+). The catalysed reaction is Thiol-dependent hydrolysis of ester, thioester, amide, peptide and isopeptide bonds formed by the C-terminal Gly of ubiquitin (a 76-residue protein attached to proteins as an intracellular targeting signal).. It carries out the reaction a 5'-end (N(7)-methyl 5'-triphosphoguanosine)-ribonucleoside in mRNA + S-adenosyl-L-methionine = a 5'-end (N(7)-methyl 5'-triphosphoguanosine)-(2'-O-methyl-ribonucleoside) in mRNA + S-adenosyl-L-homocysteine + H(+). The enzyme catalyses uridylyl-uridylyl-ribonucleotide-RNA = a 3'-end uridylyl-2',3'-cyclophospho-uridine-RNA + a 5'-end dephospho-ribonucleoside-RNA. It catalyses the reaction a 5'-end diphospho-ribonucleoside in mRNA + GTP + H(+) = a 5'-end (5'-triphosphoguanosine)-ribonucleoside in mRNA + diphosphate. The catalysed reaction is a 5'-end (5'-triphosphoguanosine)-ribonucleoside in mRNA + S-adenosyl-L-methionine = a 5'-end (N(7)-methyl 5'-triphosphoguanosine)-ribonucleoside in mRNA + S-adenosyl-L-homocysteine. In terms of biological role, the replicase polyprotein of coronaviruses is a multifunctional protein: it contains the activities necessary for the transcription of negative stranded RNA, leader RNA, subgenomic mRNAs and progeny virion RNA as well as proteinases responsible for the cleavage of the polyprotein into functional products. Functionally, inhibits host translation by interacting with the 40S ribosomal subunit. The nsp1-40S ribosome complex further induces an endonucleolytic cleavage near the 5'UTR of host mRNAs, targeting them for degradation. Viral mRNAs are not susceptible to nsp1-mediated endonucleolytic RNA cleavage thanks to the presence of a 5'-end leader sequence and are therefore protected from degradation. By suppressing host gene expression, nsp1 facilitates efficient viral gene expression in infected cells and evasion from host immune response. May play a role in the modulation of host cell survival signaling pathway by interacting with host PHB and PHB2. Indeed, these two proteins play a role in maintaining the functional integrity of the mitochondria and protecting cells from various stresses. Its function is as follows. Responsible for the cleavages located at the N-terminus of the replicase polyprotein. In addition, PL-PRO possesses a deubiquitinating/deISGylating activity and processes both 'Lys-48'- and 'Lys-63'-linked polyubiquitin chains from cellular substrates. Participates together with nsp4 in the assembly of virally-induced cytoplasmic double-membrane vesicles necessary for viral replication. Antagonizes innate immune induction of type I interferon by blocking the phosphorylation, dimerization and subsequent nuclear translocation of host IRF3. Also prevents host NF-kappa-B signaling. In terms of biological role, participates in the assembly of virally-induced cytoplasmic double-membrane vesicles necessary for viral replication. Functionally, cleaves the C-terminus of replicase polyprotein at 11 sites. Recognizes substrates containing the core sequence [ILMVF]-Q-|-[SGACN]. Also able to bind an ADP-ribose-1''-phosphate (ADRP). Plays a role in the initial induction of autophagosomes from host endoplasmic reticulum. Later, limits the expansion of these phagosomes that are no longer able to deliver viral components to lysosomes. Its function is as follows. Forms a hexadecamer with nsp8 (8 subunits of each) that may participate in viral replication by acting as a primase. Alternatively, may synthesize substantially longer products than oligonucleotide primers. In terms of biological role, forms a hexadecamer with nsp7 (8 subunits of each) that may participate in viral replication by acting as a primase. Alternatively, may synthesize substantially longer products than oligonucleotide primers. Functionally, forms a primer, NSP9-pU, which is utilized by the polymerase for the initiation of RNA chains. Interacts with ribosome signal recognition particle RNA (SRP). Together with NSP8, suppress protein integration into the cell membrane, thereby disrupting host immune defenses. Plays a pivotal role in viral transcription by stimulating both nsp14 3'-5' exoribonuclease and nsp16 2'-O-methyltransferase activities. Therefore plays an essential role in viral mRNAs cap methylation. Its function is as follows. RNA-directed RNA polymerase that catalyzes the transcription of viral genomic and subgenomic RNAs. Acts in complex with nsp7 and nsp8 to transcribe both the minus and positive strands of genomic RNA. The kinase-like NiRAN domain of NSP12 attaches one or more nucleotides to the amino terminus of NSP9, forming a covalent RNA-protein intermediate that serves as transcription/replication primer. Subgenomic RNAs (sgRNAs) are formed by discontinuous transcription: The polymerase has the ability to pause at transcription-regulating sequences (TRS) and jump to the leader TRS, resulting in a major deletion. This creates a series of subgenomic RNAs that are replicated, transcribed and translated. In addition, Nsp12 is a subunit of the viral RNA capping enzyme that catalyzes the RNA guanylyltransferase reaction for genomic and sub-genomic RNAs. Subsequently, the NiRAN domain transfers RNA to GDP, and forms the core cap structure GpppA-RNA. In terms of biological role, multi-functional protein with a zinc-binding domain in N-terminus displaying RNA and DNA duplex-unwinding activities with 5' to 3' polarity. Activity of helicase is dependent on magnesium. Functionally, plays a role in viral RNA synthesis through two distinct activities. The N7-guanine methyltransferase activity plays a role in the formation of the cap structure GpppA-RNA. The proofreading exoribonuclease reduces the sensitivity of the virus to RNA mutagens during replication. This activity acts on both ssRNA and dsRNA in a 3'-5' direction. Plays a role in viral transcription/replication and prevents the simultaneous activation of host cell dsRNA sensors, such as MDA5/IFIH1, OAS, and PKR. Acts by degrading the 5'-polyuridines generated during replication of the poly(A) region of viral genomic and subgenomic RNAs. Catalyzes a two-step reaction in which a 2'3'-cyclic phosphate (2'3'-cP) is first generated by 2'-O transesterification, which is then hydrolyzed to a 3'-phosphate (3'-P). If not degraded, poly(U) RNA would hybridize with poly(A) RNA tails and activate host dsRNA sensors. Its function is as follows. Methyltransferase that mediates mRNA cap 2'-O-ribose methylation to the 5'-cap structure of viral mRNAs. N7-methyl guanosine cap is a prerequisite for binding of nsp16. Therefore plays an essential role in viral mRNAs cap methylation which is essential to evade immune system. The protein is Replicase polyprotein 1ab (rep) of Bos taurus (Bovine).